Here is a 220-residue protein sequence, read N- to C-terminus: MVILTKEASMVRQALLANGLEPFLRGEERLGIEARKRRIAAHMKKIMTLLNLDLADDSLAKTPYRIAYMYIEEIFPGLDYANFPQITLISNKMKADEMVTVRNITLTSTCEHHFLMIDGKATVSYIPKSNVIGLSKINRIVRFFAQRPQVQERLTQQILLALQTILGTNNVAVSIYAVHYCVKARGICDSTSTTTTTSLGGIFKSSQNTRQEFLRTINQT.

3 residues coordinate Zn(2+): Cys-110, His-113, and Cys-181.

This sequence belongs to the GTP cyclohydrolase I family. As to quaternary structure, toroid-shaped homodecamer, composed of two pentamers of five dimers.

The catalysed reaction is GTP + H2O = 7,8-dihydroneopterin 3'-triphosphate + formate + H(+). The protein operates within cofactor biosynthesis; 7,8-dihydroneopterin triphosphate biosynthesis; 7,8-dihydroneopterin triphosphate from GTP: step 1/1. This is GTP cyclohydrolase 1 from Baumannia cicadellinicola subsp. Homalodisca coagulata.